The chain runs to 73 residues: Disintegrin lutosin (73 aa).

Residues 1–73 (EAGEECDCGS…ADCPRNGLYG (73 aa)) form the Disintegrin domain. Disulfide bonds link Cys6-Cys21, Cys8-Cys16, Cys15-Cys38, Cys29-Cys35, Cys34-Cys59, and Cys47-Cys66. The Cell attachment site signature appears at 51–53 (RGD).

The protein belongs to the venom metalloproteinase (M12B) family. P-II subfamily. P-IIa sub-subfamily. In terms of assembly, monomer (disintegrin). As to expression, expressed by the venom gland.

Its subcellular location is the secreted. Inhibits fibrinogen interaction with platelets. Acts by binding to alpha-IIb/beta-3 (ITGA2B/ITGB3) on the platelet surface and inhibits aggregation induced by ADP, thrombin, platelet-activating factor and collagen. This is Disintegrin lutosin from Crotalus lutosus (Great basin rattlesnake).